The primary structure comprises 133 residues: Nickel-responsive regulator (133 aa).

The Ni(2+) site is built by His-76, His-87, His-89, and Cys-95.

It belongs to the transcriptional regulatory CopG/NikR family. Homotetramer. Requires Ni(2+) as cofactor.

Its function is as follows. Transcriptional repressor of the nikABCDE operon. Is active in the presence of excessive concentrations of intracellular nickel. The sequence is that of Nickel-responsive regulator from Salmonella paratyphi A (strain ATCC 9150 / SARB42).